The primary structure comprises 957 residues: SH3 domain-binding protein 4-B (957 aa).

Positions 54–113 (ENVKEVVAIKDYCPNNFTTLKFSKGEHLYVLDASGGDWWYAHNTTEMGYIPSSYVQPLNY) constitute an SH3 1 domain. Positions 312 to 449 (TSIVCRLDSS…LEPVMYVVMV (138 aa)) constitute a ZU5 domain. The 71-residue stretch at 649 to 719 (TSLKYGKLIK…HAKNVLVVGK (71 aa)) folds into the SH3 2 domain.

In terms of assembly, homodimer or homooligomer.

It localises to the membrane. Its subcellular location is the clathrin-coated pit. The protein localises to the cytoplasmic vesicle. The protein resides in the clathrin-coated vesicle. It is found in the nucleus. Functionally, possible role in regulating endocytosis of the transferrin receptor at the plasma membrane. Alternatively, may function as a negative regulator of the amino acid-induced TOR signaling by inhibiting the formation of active Rag GTPase complexes. Preferentially binds inactive Rag GTPase complexes and prevents their interaction with the mTORC1 complex inhibiting its relocalization to lysosomes and its activation. Thereby, may indirectly regulate cell growth, proliferation and autophagy. This chain is SH3 domain-binding protein 4-B (sh3bp4-b), found in Xenopus laevis (African clawed frog).